The sequence spans 200 residues: Eukaryotic translation initiation factor isoform 4E (200 aa).

MRNA contacts are provided by residues 44–49 (QGVAWG), K76, and 94–95 (WE). C99 and C138 are oxidised to a cystine. MRNA is bound by residues 145–150 (RRSQDK) and 189–192 (KRER).

This sequence belongs to the eukaryotic initiation factor 4E family. In terms of assembly, EIF4F is a multi-subunit complex, the composition of which varies with external and internal environmental conditions. It is composed of at least EIF4A, EIF4E and EIF4G. EIF4E is also known to interact with other partners. In higher plants two isoforms of EIF4F have been identified, named isoform EIF4F and isoform EIF(iso)4F. Isoform EIF4F has subunits p220 and p26, whereas isoform EIF(iso)4F has subunits p82 and p28. As to quaternary structure, (Microbial infection) Interacts with viral genome-linked protein (VPg); this interaction is possible in susceptible hosts but impaired in resistant plants. Post-translationally, according to the redox status, the Cys-99-Cys-138 disulfide bridge may have a role in regulating protein function by affecting its ability to bind capped mRNA. In terms of tissue distribution, mostly expressed in roots and leaves, and, to a lower extent, in stems, flowers and immature green fruits.

It localises to the cytoplasm. Its subcellular location is the nucleus. Component of the protein complex eIF4F, which is involved in the recognition of the mRNA cap, ATP-dependent unwinding of 5'-terminal secondary structure and recruitment of mRNA to the ribosome. Recognizes and binds the 7-methylguanosine-containing mRNA cap during an early step in the initiation of protein synthesis and facilitates ribosome binding by inducing the unwinding of the mRNAs secondary structures. Key component of recessive resistance to potyviruses. In terms of biological role, (Microbial infection) Susceptibility host factor required for viral infection by recruiting viral RNAs to the host ribosomal complex via an interaction with viral genome-linked protein (VPg). This chain is Eukaryotic translation initiation factor isoform 4E, found in Solanum lycopersicum (Tomato).